The sequence spans 247 residues: tRNA pseudouridine synthase A (247 aa).

Asp-53 acts as the Nucleophile in catalysis. Residue Tyr-112 coordinates substrate.

It belongs to the tRNA pseudouridine synthase TruA family. Homodimer.

It carries out the reaction uridine(38/39/40) in tRNA = pseudouridine(38/39/40) in tRNA. Its function is as follows. Formation of pseudouridine at positions 38, 39 and 40 in the anticodon stem and loop of transfer RNAs. This chain is tRNA pseudouridine synthase A, found in Anaplasma marginale (strain St. Maries).